Reading from the N-terminus, the 629-residue chain is DNA-directed RNA polymerase subunit beta' (629 aa).

Zn(2+)-binding residues include cysteine 70, cysteine 72, cysteine 85, and cysteine 88. The Mg(2+) site is built by aspartate 472, aspartate 474, and aspartate 476.

The protein belongs to the RNA polymerase beta' chain family. RpoC1 subfamily. In terms of assembly, in plastids the minimal PEP RNA polymerase catalytic core is composed of four subunits: alpha, beta, beta', and beta''. When a (nuclear-encoded) sigma factor is associated with the core the holoenzyme is formed, which can initiate transcription. Mg(2+) is required as a cofactor. Requires Zn(2+) as cofactor.

Its subcellular location is the plastid. The protein resides in the chloroplast. It catalyses the reaction RNA(n) + a ribonucleoside 5'-triphosphate = RNA(n+1) + diphosphate. In terms of biological role, DNA-dependent RNA polymerase catalyzes the transcription of DNA into RNA using the four ribonucleoside triphosphates as substrates. This Porphyra purpurea (Red seaweed) protein is DNA-directed RNA polymerase subunit beta'.